Reading from the N-terminus, the 329-residue chain is Phosphoenolpyruvate transferase (329 aa).

D61 contributes to the 7,8-didemethyl-8-hydroxy-5-deazariboflavin binding site.

The protein belongs to the CofD family. Homodimer. Mg(2+) is required as a cofactor.

It catalyses the reaction enolpyruvoyl-2-diphospho-5'-guanosine + 7,8-didemethyl-8-hydroxy-5-deazariboflavin = dehydro coenzyme F420-0 + GMP + H(+). It participates in cofactor biosynthesis; coenzyme F420 biosynthesis. In terms of biological role, catalyzes the transfer of the phosphoenolpyruvate moiety from enoylpyruvoyl-2-diphospho-5'-guanosine (EPPG) to 7,8-didemethyl-8-hydroxy-5-deazariboflavin (FO) with the formation of dehydro coenzyme F420-0 and GMP. The chain is Phosphoenolpyruvate transferase from Mycobacterium ulcerans (strain Agy99).